The following is a 432-amino-acid chain: Trigger factor (432 aa).

The PPIase FKBP-type domain maps to 163–248; it reads GDIAVIDFEG…LKALNKKELP (86 aa).

Belongs to the FKBP-type PPIase family. Tig subfamily.

Its subcellular location is the cytoplasm. The enzyme catalyses [protein]-peptidylproline (omega=180) = [protein]-peptidylproline (omega=0). Its function is as follows. Involved in protein export. Acts as a chaperone by maintaining the newly synthesized protein in an open conformation. Functions as a peptidyl-prolyl cis-trans isomerase. This Thermoanaerobacter pseudethanolicus (strain ATCC 33223 / 39E) (Clostridium thermohydrosulfuricum) protein is Trigger factor.